A 366-amino-acid polypeptide reads, in one-letter code: Ribonuclease P protein subunit drpp30 (366 aa).

A disordered region spans residues 265 to 366; it reads EDTQPTNNNI…DIDNNKRKRE (102 aa). Residues 275 to 290 show a composition bias toward basic and acidic residues; it reads PHEKHINKESTGKETI. Low complexity-rich tracts occupy residues 291–324 and 333–351; these read PKPT…TPSI and TAKS…AQKQ. The segment covering 352-366 has biased composition (basic and acidic residues); it reads GKMDIDIDNNKRKRE.

It belongs to the eukaryotic/archaeal RNase P protein component 3 family.

It is found in the nucleus. It carries out the reaction Endonucleolytic cleavage of RNA, removing 5'-extranucleotides from tRNA precursor.. Component of ribonuclease P, a protein complex that generates mature tRNA molecules by cleaving their 5'-ends. The polypeptide is Ribonuclease P protein subunit drpp30 (drpp30) (Dictyostelium discoideum (Social amoeba)).